The following is a 398-amino-acid chain: Succinate--CoA ligase [ADP-forming] subunit beta (398 aa).

The ATP-grasp domain occupies 9-253 (KEILNSFGVR…VREENATEVE (245 aa)). ATP is bound by residues Lys50, 57-59 (GRG), Val106, and Glu116. Asn208 and Asp222 together coordinate Mg(2+). Substrate contacts are provided by residues Asn273 and 330-332 (GIV).

Belongs to the succinate/malate CoA ligase beta subunit family. In terms of assembly, heterotetramer of two alpha and two beta subunits. Mg(2+) is required as a cofactor.

The catalysed reaction is succinate + ATP + CoA = succinyl-CoA + ADP + phosphate. The enzyme catalyses GTP + succinate + CoA = succinyl-CoA + GDP + phosphate. The protein operates within carbohydrate metabolism; tricarboxylic acid cycle; succinate from succinyl-CoA (ligase route): step 1/1. Functionally, succinyl-CoA synthetase functions in the citric acid cycle (TCA), coupling the hydrolysis of succinyl-CoA to the synthesis of either ATP or GTP and thus represents the only step of substrate-level phosphorylation in the TCA. The beta subunit provides nucleotide specificity of the enzyme and binds the substrate succinate, while the binding sites for coenzyme A and phosphate are found in the alpha subunit. The polypeptide is Succinate--CoA ligase [ADP-forming] subunit beta (Christiangramia forsetii (strain DSM 17595 / CGMCC 1.15422 / KT0803) (Gramella forsetii)).